The following is a 305-amino-acid chain: Ubiquinone biosynthesis protein COQ4 homolog, mitochondrial (305 aa).

Zn(2+) contacts are provided by His150, Asp151, His154, and Glu166.

The protein belongs to the COQ4 family. As to quaternary structure, component of a multi-subunit COQ enzyme complex. The cofactor is Zn(2+).

The protein resides in the mitochondrion inner membrane. The catalysed reaction is a 4-hydroxy-3-methoxy-5-(all-trans-polyprenyl)benzoate + H(+) = a 2-methoxy-6-(all-trans-polyprenyl)phenol + CO2. It participates in cofactor biosynthesis; ubiquinone biosynthesis. In terms of biological role, lyase that catalyzes the C1-decarboxylation of 4-hydroxy-3-methoxy-5-(all-trans-polyprenyl)benzoic acid into 2-methoxy-6-(all-trans-polyprenyl)phenol during ubiquinone biosynthesis. The chain is Ubiquinone biosynthesis protein COQ4 homolog, mitochondrial from Cryptosporidium parvum (strain Iowa II).